A 156-amino-acid polypeptide reads, in one-letter code: Small ribosomal subunit protein uS7 (156 aa).

Belongs to the universal ribosomal protein uS7 family. In terms of assembly, part of the 30S ribosomal subunit. Contacts proteins S9 and S11.

Functionally, one of the primary rRNA binding proteins, it binds directly to 16S rRNA where it nucleates assembly of the head domain of the 30S subunit. Is located at the subunit interface close to the decoding center, probably blocks exit of the E-site tRNA. The protein is Small ribosomal subunit protein uS7 of Nitrobacter hamburgensis (strain DSM 10229 / NCIMB 13809 / X14).